Consider the following 103-residue polypeptide: Regulator of rDNA transcription protein 1 (103 aa).

2 helical membrane-spanning segments follow: residues Phe-9–Val-33 and Val-40–Phe-57.

Its subcellular location is the membrane. Its function is as follows. Identified in a screen for mutants with decreased levels of rDNA transcription. In Saccharomyces cerevisiae (strain ATCC 204508 / S288c) (Baker's yeast), this protein is Regulator of rDNA transcription protein 1 (RRT1).